The following is a 232-amino-acid chain: Lipopolysaccharide core heptose(II) kinase WaaY (232 aa).

The protein belongs to the protein kinase superfamily. RfaY/WaaY family.

The catalysed reaction is alpha-D-Glc-(1-&gt;3)-[L-alpha-D-Hep-(1-&gt;7)]-L-alpha-D-Hep-(1-&gt;3)-4-O-PO3(2-)-L-alpha-D-Hep-(1-&gt;5)-[alpha-Kdo-(2-&gt;4)]-alpha-Kdo-(2-&gt;6)-lipid A + ATP = alpha-D-Glc-(1-&gt;3)-[L-alpha-D-Hep-(1-&gt;7)]-4-O-PO3(2-)-L-alpha-D-Hep-(1-&gt;3)-4-O-PO3(2-)-L-alpha-D-Hep-(1-&gt;5)-[alpha-Kdo-(2-&gt;4)]-alpha-Kdo-(2-&gt;6)-lipid A + ADP + H(+). The protein operates within bacterial outer membrane biogenesis; LPS core biosynthesis. Kinase involved in the biosynthesis of the core oligosaccharide region of lipopolysaccharide (LPS). Catalyzes the phosphorylation of the second heptose unit (HepII) of the inner core. This chain is Lipopolysaccharide core heptose(II) kinase WaaY, found in Salmonella typhimurium (strain LT2 / SGSC1412 / ATCC 700720).